Here is a 338-residue protein sequence, read N- to C-terminus: Transcription factor AP-4 (338 aa).

The bHLH domain occupies 48–99 (IRREIANSNERRRMQSINAGFQSLKTLIPHTDGEKLSKAAILQQTAEYIFSL). The segment at 100–120 (EQEKTRLLQQNTQLKRFIQEL) is leucine-zipper 1. The segment at 118–141 (QELSGSSPKRRRAEDKDEGIGSPD) is disordered. Phosphoserine occurs at positions 123, 124, and 139. K147 participates in a covalent cross-link: Glycyl lysine isopeptide (Lys-Gly) (interchain with G-Cter in SUMO2). The segment at 151–179 (LRREMIELRQQLDKERSVRMMLEEQVRSL) is leucine-zipper 2. Glycyl lysine isopeptide (Lys-Gly) (interchain with G-Cter in SUMO2) cross-links involve residues K187, K189, and K285. Residues 283–294 (QEKQELEEEQRR) are compositionally biased toward basic and acidic residues. The disordered stretch occupies residues 283–338 (QEKQELEEEQRRAVIVKPVRSCPEAPTSDTASDSEASDSDAMDQSREEPSGDGELP).

In terms of assembly, efficient DNA binding requires dimerization with another bHLH protein. Homodimer.

Its subcellular location is the nucleus. Its function is as follows. Transcription factor that activates both viral and cellular genes by binding to the symmetrical DNA sequence 5'-CAGCTG-3'. The protein is Transcription factor AP-4 (TFAP4) of Homo sapiens (Human).